The following is a 477-amino-acid chain: UDP-N-acetylmuramate--L-alanine ligase (477 aa).

122–128 (GTHGKTT) lines the ATP pocket.

Belongs to the MurCDEF family.

The protein resides in the cytoplasm. It catalyses the reaction UDP-N-acetyl-alpha-D-muramate + L-alanine + ATP = UDP-N-acetyl-alpha-D-muramoyl-L-alanine + ADP + phosphate + H(+). The protein operates within cell wall biogenesis; peptidoglycan biosynthesis. In terms of biological role, cell wall formation. The polypeptide is UDP-N-acetylmuramate--L-alanine ligase (Xanthomonas campestris pv. campestris (strain 8004)).